Here is a 339-residue protein sequence, read N- to C-terminus: 2-halobenzoate 1,2-dioxygenase electron transfer component (339 aa).

The 2Fe-2S ferredoxin-type domain maps to 3–96 (HSIALRFEDD…DCVVRILASS (94 aa)). Positions 40, 45, 48, and 80 each coordinate [2Fe-2S] cluster. A ferredoxin-reductase region spans residues 98–336 (ACQVKKSTMT…NFYFEKFAPT (239 aa)). Residues 103–203 (KSTMTGQMTE…DGPYGAFYLR (101 aa)) enclose the FAD-binding FR-type domain.

It belongs to the bacterial ring-hydroxylating dioxygenase ferredoxin reductase family. As to quaternary structure, monomer. It is part of 2-halobenzoate dioxygenase two component enzyme system. The other component is a dioxygenase component consisting of 3 large (CbdA) subunits and 3 small (CbdB) subunits. The cofactor is FAD. [2Fe-2S] cluster is required as a cofactor.

The enzyme catalyses 2 reduced [2Fe-2S]-[ferredoxin] + NAD(+) + H(+) = 2 oxidized [2Fe-2S]-[ferredoxin] + NADH. It functions in the pathway xenobiotic degradation; benzoate degradation via CoA ligation. Its function is as follows. Electron transfer component of 2-halobenzoate 1,2-dioxygenase system. The polypeptide is 2-halobenzoate 1,2-dioxygenase electron transfer component (cbdC) (Burkholderia cepacia (Pseudomonas cepacia)).